We begin with the raw amino-acid sequence, 242 residues long: MAFGPAAMGYDRAITIFSPDGSLYQVDYAFEAVKKGWTTLGVKTKAGVVLIGEKRKATQLLDVDSIEKVFILDDHVGCSFAGLASDGRILIDYARSQALQHRLIYDEPINIDYLTKLVSDVKQMYTQHGGVRPFGVALIIGGIDRGKTPKLLMTEPSGQFMPYYAVAIGQGGYTATEYFEKNYREDLNMQDTILLGIRALASTLKPGEKLAPSNIEVGFADVDSGMFRKMSFEERASILQKL.

It belongs to the peptidase T1A family. In terms of assembly, the 20S proteasome core is composed of 14 alpha and 14 beta subunits that assemble into four stacked heptameric rings, resulting in a barrel-shaped structure. The two inner rings, each composed of seven catalytic beta subunits, are sandwiched by two outer rings, each composed of seven alpha subunits. The catalytic chamber with the active sites is on the inside of the barrel. Has a gated structure, the ends of the cylinder being occluded by the N-termini of the alpha-subunits. Is capped at one or both ends by the proteasome regulatory ATPase, PAN.

The protein resides in the cytoplasm. Its activity is regulated as follows. The formation of the proteasomal ATPase PAN-20S proteasome complex, via the docking of the C-termini of PAN into the intersubunit pockets in the alpha-rings, triggers opening of the gate for substrate entry. Interconversion between the open-gate and close-gate conformations leads to a dynamic regulation of the 20S proteasome proteolysis activity. Component of the proteasome core, a large protease complex with broad specificity involved in protein degradation. This is Proteasome subunit alpha from Sulfurisphaera tokodaii (strain DSM 16993 / JCM 10545 / NBRC 100140 / 7) (Sulfolobus tokodaii).